The sequence spans 69 residues: Putative membrane protein insertion efficiency factor (69 aa).

It belongs to the UPF0161 family.

It is found in the cell membrane. Its function is as follows. Could be involved in insertion of integral membrane proteins into the membrane. This is Putative membrane protein insertion efficiency factor from Alkaliphilus metalliredigens (strain QYMF).